The sequence spans 1422 residues: DNA-directed RNA polymerase subunit beta (1422 aa).

Positions 1392–1422 are disordered; it reads QAAREAAERDLGGGPLGAPRGAVASGEKSSA.

This sequence belongs to the RNA polymerase beta chain family. As to quaternary structure, the RNAP catalytic core consists of 2 alpha, 1 beta, 1 beta' and 1 omega subunit. When a sigma factor is associated with the core the holoenzyme is formed, which can initiate transcription.

It catalyses the reaction RNA(n) + a ribonucleoside 5'-triphosphate = RNA(n+1) + diphosphate. Its function is as follows. DNA-dependent RNA polymerase catalyzes the transcription of DNA into RNA using the four ribonucleoside triphosphates as substrates. In Anaeromyxobacter dehalogenans (strain 2CP-1 / ATCC BAA-258), this protein is DNA-directed RNA polymerase subunit beta.